Consider the following 72-residue polypeptide: Metallothionein-like protein 1B (72 aa).

Belongs to the metallothionein superfamily. Type 15 family. As to expression, expressed in leaves of mature plants.

Its function is as follows. Metallothioneins have a high content of cysteine residues that bind various heavy metals. Functions as a metal chelator of nickel (Ni), cadmium (Cd), zinc (Zn) and copper (Cu). Possesses higher affinity for Ni and Cd ions compared to Zn and Cu ions. In Oryza sativa subsp. japonica (Rice), this protein is Metallothionein-like protein 1B (MT1B).